The following is a 294-amino-acid chain: tRNA pseudouridine synthase B (294 aa).

The active-site Nucleophile is Asp-39.

Belongs to the pseudouridine synthase TruB family. Type 1 subfamily.

It catalyses the reaction uridine(55) in tRNA = pseudouridine(55) in tRNA. Responsible for synthesis of pseudouridine from uracil-55 in the psi GC loop of transfer RNAs. This is tRNA pseudouridine synthase B from Streptococcus agalactiae serotype Ia (strain ATCC 27591 / A909 / CDC SS700).